A 695-amino-acid polypeptide reads, in one-letter code: Probable pre-mRNA-splicing factor ATP-dependent RNA helicase DEAH9 (695 aa).

The Helicase ATP-binding domain maps to Leu-58–Pro-223. Residue Gly-71–Thr-78 coordinates ATP. Residues Asp-170–His-173 carry the DEAH box motif. A Helicase C-terminal domain is found at Ser-261–Gly-438.

Belongs to the DEAD box helicase family. DEAH subfamily. DDX35 sub-subfamily.

It carries out the reaction ATP + H2O = ADP + phosphate + H(+). Functionally, may be involved in pre-mRNA splicing. The polypeptide is Probable pre-mRNA-splicing factor ATP-dependent RNA helicase DEAH9 (Arabidopsis thaliana (Mouse-ear cress)).